The sequence spans 458 residues: L-hydantoinase (458 aa).

Positions 60, 62, 147, 183, 239, and 312 each coordinate Zn(2+). At K147 the chain carries N6-carboxylysine.

In terms of assembly, homotetramer. Zn(2+) is required as a cofactor. Post-translationally, carboxylation allows a single lysine to coordinate two zinc ions.

In terms of biological role, rather more predominant for the cleavage of aryl- than for alkyl-hydantoin derivatives. The stereoselectivity of this enzyme depends on the substrate used for bioconversion: strictly L-selective for the cleavage of D,L-5-indolylmethylhydantoin, but D-selective for the hydrolysis of D,L-methylthioethylhydantoin. This Paenarthrobacter aurescens (Arthrobacter aurescens) protein is L-hydantoinase (lhyD).